The chain runs to 445 residues: Glucose-6-phosphate isomerase (445 aa).

Catalysis depends on Glu-287, which acts as the Proton donor. Catalysis depends on residues His-308 and Lys-422.

This sequence belongs to the GPI family.

It is found in the cytoplasm. The enzyme catalyses alpha-D-glucose 6-phosphate = beta-D-fructose 6-phosphate. The protein operates within carbohydrate biosynthesis; gluconeogenesis. It functions in the pathway carbohydrate degradation; glycolysis; D-glyceraldehyde 3-phosphate and glycerone phosphate from D-glucose: step 2/4. Catalyzes the reversible isomerization of glucose-6-phosphate to fructose-6-phosphate. This Bacteroides fragilis (strain ATCC 25285 / DSM 2151 / CCUG 4856 / JCM 11019 / LMG 10263 / NCTC 9343 / Onslow / VPI 2553 / EN-2) protein is Glucose-6-phosphate isomerase.